The primary structure comprises 1172 residues: Carbamoyl phosphate synthase arginine-specific large chain, chloroplastic (1172 aa).

Over residues 1–10 the composition is skewed to polar residues; the sequence is MATSLSSAPT. The segment at 1-37 is disordered; sequence MATSLSSAPTQLRPSPSPSHHRLLHRSSLLPFPRRHH. The N-terminal 50 residues, 1–50, are a transit peptide targeting the chloroplast; it reads MATSLSSAPTQLRPSPSPSHHRLLHRSSLLPFPRRHHHRRRRCGALSIAR. Positions 72–473 are carboxyphosphate synthetic domain; it reads GRLAGVRKIM…SFQKAVRSLE (402 aa). Residues Arg-199, Arg-240, Gly-246, Gly-247, Lys-279, Leu-281, Glu-286, Gly-312, Val-313, His-314, Gln-356, and Glu-370 each contribute to the ATP site. The ATP-grasp 1 domain occupies 203 to 399; sequence KQAMDRIGLK…IAKMAAKLSV (197 aa). Mg(2+)-binding residues include Gln-356, Glu-370, and Asn-372. Positions 474–623 are oligomerization domain; that stretch reads TGFAGWGCAP…YSSYEYECES (150 aa). The interval 624–1019 is carbamoyl phosphate synthetic domain; the sequence is VPTNKKKVLI…GAFAKAQIAA (396 aa). The ATP-grasp 2 domain maps to 761 to 954; the sequence is NAILEELGIE…LAKYASLVMS (194 aa). 10 residues coordinate ATP: Arg-797, Lys-836, Leu-838, Glu-843, Gly-869, Ile-870, His-871, Ser-872, Gln-912, and Glu-925. Mg(2+) contacts are provided by Gln-912, Glu-925, and Asn-927. The tract at residues 1020 to 1172 is allosteric domain; that stretch reads GQKLPLNGTV…QNLQAAQSAS (153 aa). The MGS-like domain occupies 1021–1162; that stretch reads QKLPLNGTVF…QDYFQTTDAS (142 aa).

Belongs to the CarB family. As to quaternary structure, heterodimer composed of 2 chains; the small (or glutamine) chain promotes the hydrolysis of glutamine to ammonia, which is used by the large (or ammonia) chain to synthesize carbamoyl phosphate. It depends on Mg(2+) as a cofactor. Mn(2+) serves as cofactor.

It localises to the plastid. It is found in the chloroplast. The enzyme catalyses hydrogencarbonate + L-glutamine + 2 ATP + H2O = carbamoyl phosphate + L-glutamate + 2 ADP + phosphate + 2 H(+). It catalyses the reaction hydrogencarbonate + NH4(+) + 2 ATP = carbamoyl phosphate + 2 ADP + phosphate + 2 H(+). It participates in amino-acid biosynthesis; L-arginine biosynthesis; carbamoyl phosphate from bicarbonate: step 1/1. Its function is as follows. Large subunit of the arginine-specific carbamoyl phosphate synthase (CPSase). CPSase catalyzes the formation of carbamoyl phosphate from the ammonia moiety of glutamine, hydrogencarbonate, and phosphate donated by ATP, constituting the first step of 2 biosynthetic pathways, one leading to arginine and/or urea and the other to pyrimidine nucleotides. The large subunit (synthetase) binds the substrates ammonia (free or transferred from glutamine from the small subunit), hydrogencarbonate and ATP and carries out an ATP-coupled ligase reaction, activating hydrogencarbonate by forming carboxy phosphate which reacts with ammonia to form carbamoyl phosphate. This is Carbamoyl phosphate synthase arginine-specific large chain, chloroplastic (CARB) from Oryza sativa subsp. japonica (Rice).